A 207-amino-acid polypeptide reads, in one-letter code: Ras-related protein Rab-8A (207 aa).

The GTP site is built by serine 17, glycine 18, valine 19, glycine 20, lysine 21, threonine 22, cysteine 23, serine 35, serine 39, and threonine 40. Threonine 22 lines the Mg(2+) pocket. Short sequence motifs (switch) lie at residues aspartate 31–phenylalanine 45 and aspartate 63–glycine 80. Mg(2+) is bound by residues threonine 40 and aspartate 63. Glycine 66 contacts GTP. Position 72 is a phosphothreonine (threonine 72). Residues asparagine 121, lysine 122, aspartate 124, alanine 152, and lysine 153 each coordinate GTP. Phosphoserine occurs at positions 181 and 185. Cysteine methyl ester is present on cysteine 204. Cysteine 204 carries S-geranylgeranyl cysteine lipidation. Residues valine 205–leucine 207 constitute a propeptide, removed in mature form.

The protein belongs to the small GTPase superfamily. Rab family. Interacts (GTP-bound form) with MICALL1; regulates RAB8A association with recycling endosomes. Interacts with MICALL2; competes with RAB13 and is involved in E-cadherin endocytic recycling. Interacts (GTP-bound form) with MICAL1, MICALCL, MICAL3, EHBP1 and EHBP1L1; at least in case of MICAL1, MICALCL, MICAL3 and EHBP1L1 two molecules of RAB8A can bind to one molecule of the effector protein; ternary complexes of RAB8A, RAB13 and either MICAL1 or EHBP1L1 are possible. Interacts with EHD1. Interacts with MAP4K2 and SYTL4. Interacts with SGSM1 and SGSM3. Interacts with RABIF, RIMS2, RPH3A and RPH3A. Interacts with OPTN. Interacts with RAB3IP, RAB3IP functions as guanine exchange factor (GEF). Interacts with MYO5B. Interacts with CIMAP3. Interacts with BIRC6/bruce. Interacts with OCRL. Interacts with AHI1. Interacts with DCDC1. Interacts with LRRK2; interaction facilitates phosphorylation of Thr-72. Interacts with RAB31P, GDI1, GDI2, CHM, CHML, RABGGTA, RABGGTB, TBC1D15 and INPP5B; these interactions are dependent on Thr-72 not being phosphorylated. Interacts with RILPL1 and RILPL2; these interactions are dependent on the phosphorylation of Thr-72 by LRRK2. Interacts with DZIP1; prevents inhibition by the GDP-dissociation inhibitor GDI2. Interacts (in GDP-bound form) with RAB3IP/Rabin8, RAB3IP functions as guanine exchange factor (GEF) towards RAB8A. Interacts (in GDP-bound form) with RPGR, RPGR functions as GEF towards RAB8A. It depends on Mg(2+) as a cofactor. In terms of processing, phosphorylation of Thr-72 in the switch II region by LRRK2 prevents the association of RAB regulatory proteins, including CHM, CHML and RAB GDP dissociation inhibitors GDI1 and GDI2. Phosphorylation by LRRK2 is required for localization to stressed lysosomes.

It is found in the cell membrane. Its subcellular location is the golgi apparatus. The protein resides in the endosome membrane. The protein localises to the recycling endosome membrane. It localises to the cell projection. It is found in the cilium. Its subcellular location is the cytoplasmic vesicle. The protein resides in the phagosome membrane. The protein localises to the cytoplasm. It localises to the cytoskeleton. It is found in the microtubule organizing center. Its subcellular location is the centrosome. The protein resides in the centriole. The protein localises to the cilium basal body. It localises to the midbody. It is found in the lysosome. It catalyses the reaction GTP + H2O = GDP + phosphate + H(+). Its activity is regulated as follows. Regulated by guanine nucleotide exchange factors (GEFs) such as RAB3IP/Rabin8 and RPGR which promote the exchange of bound GDP for free GTP, GTPase activating proteins (GAPs) which increase the GTP hydrolysis activity, and GDP dissociation inhibitors (GDIs) which inhibit the dissociation of the nucleotide from the GTPase. Activated in response to insulin. Its function is as follows. The small GTPases Rab are key regulators of intracellular membrane trafficking, from the formation of transport vesicles to their fusion with membranes. Rabs cycle between an inactive GDP-bound form and an active GTP-bound form that is able to recruit to membranes different sets of downstream effectors directly responsible for vesicle formation, movement, tethering and fusion. RAB8A is involved in polarized vesicular trafficking and neurotransmitter release. Together with RAB11A, RAB3IP, the exocyst complex, PARD3, PRKCI, ANXA2, CDC42 and DNMBP promotes transcytosis of PODXL to the apical membrane initiation sites (AMIS), apical surface formation and lumenogenesis. Regulates the compacted morphology of the Golgi. Together with MYO5B and RAB11A participates in epithelial cell polarization. Also involved in membrane trafficking to the cilium and ciliogenesis. Together with MICALL2, may also regulate adherens junction assembly. May play a role in insulin-induced transport to the plasma membrane of the glucose transporter GLUT4 and therefore play a role in glucose homeostasis. Involved in autophagy. Participates in the export of a subset of neosynthesized proteins through a Rab8-Rab10-Rab11-dependent endososomal export route. Targeted to and stabilized on stressed lysosomes through LRRK2 phosphorylation. Suppresses stress-induced lysosomal enlargement through EHBP1 and EHNP1L1 effector proteins. This is Ras-related protein Rab-8A (RAB8A) from Bos taurus (Bovine).